The primary structure comprises 161 residues: Transcription elongation factor GreA (161 aa).

It belongs to the GreA/GreB family.

Necessary for efficient RNA polymerase transcription elongation past template-encoded arresting sites. The arresting sites in DNA have the property of trapping a certain fraction of elongating RNA polymerases that pass through, resulting in locked ternary complexes. Cleavage of the nascent transcript by cleavage factors such as GreA or GreB allows the resumption of elongation from the new 3'terminus. GreA releases sequences of 2 to 3 nucleotides. This is Transcription elongation factor GreA from Desulfotalea psychrophila (strain LSv54 / DSM 12343).